The sequence spans 245 residues: 1-(5-phosphoribosyl)-5-[(5-phosphoribosylamino)methylideneamino] imidazole-4-carboxamide isomerase (245 aa).

The active-site Proton acceptor is the D10. The active-site Proton donor is the D135.

The protein belongs to the HisA/HisF family.

The protein localises to the cytoplasm. The enzyme catalyses 1-(5-phospho-beta-D-ribosyl)-5-[(5-phospho-beta-D-ribosylamino)methylideneamino]imidazole-4-carboxamide = 5-[(5-phospho-1-deoxy-D-ribulos-1-ylimino)methylamino]-1-(5-phospho-beta-D-ribosyl)imidazole-4-carboxamide. It participates in amino-acid biosynthesis; L-histidine biosynthesis; L-histidine from 5-phospho-alpha-D-ribose 1-diphosphate: step 4/9. This is 1-(5-phosphoribosyl)-5-[(5-phosphoribosylamino)methylideneamino] imidazole-4-carboxamide isomerase from Methanosarcina acetivorans (strain ATCC 35395 / DSM 2834 / JCM 12185 / C2A).